Reading from the N-terminus, the 475-residue chain is UDP-glycosyltransferase 76E1 (475 aa).

H19 (proton acceptor) is an active-site residue. H19 contributes to the an anthocyanidin binding site. The active-site Charge relay is D109. UDP-alpha-D-glucose-binding residues include T131, A329, Q331, H346, W349, N350, S351, and E354. A369 serves as a coordination point for an anthocyanidin. The UDP-alpha-D-glucose site is built by D370 and Q371.

It belongs to the UDP-glycosyltransferase family. In terms of tissue distribution, expressed in flowers and fruits.

The protein localises to the cytoplasm. It localises to the nucleus. The enzyme catalyses 2-cis-(+)-abscisate + UDP-alpha-D-glucose = beta-D-glucopyranosyl cis-(+)-abscisate + UDP. In terms of biological role, glucosyltransferase acting on abscisic acid (ABA) but not on auxin (IAA). The sequence is that of UDP-glycosyltransferase 76E1 from Solanum lycopersicum (Tomato).